A 278-amino-acid polypeptide reads, in one-letter code: Large ribosomal subunit protein uL2 (278 aa).

2 stretches are compositionally biased toward basic residues: residues 210–220 and 257–278; these read GRMRWKGKRPS and TRRK…NKKR. Positions 210-278 are disordered; sequence GRMRWKGKRP…VRRRKSNKKR (69 aa).

The protein belongs to the universal ribosomal protein uL2 family. As to quaternary structure, part of the 50S ribosomal subunit. Forms a bridge to the 30S subunit in the 70S ribosome.

One of the primary rRNA binding proteins. Required for association of the 30S and 50S subunits to form the 70S ribosome, for tRNA binding and peptide bond formation. It has been suggested to have peptidyltransferase activity; this is somewhat controversial. Makes several contacts with the 16S rRNA in the 70S ribosome. The protein is Large ribosomal subunit protein uL2 of Acidothermus cellulolyticus (strain ATCC 43068 / DSM 8971 / 11B).